The chain runs to 487 residues: Cell wall protein TIR4 (487 aa).

The N-terminal stretch at 1–22 is a signal peptide; it reads MAYSKITLLAALAAIAYAQTQA. 11 repeat units span residues 137–148, 149–160, 161–172, 173–184, 185–196, 197–208, 209–220, 221–232, 233–244, 245–256, and 257–268. The interval 137 to 268 is 11 X 12 AA approximate tandem repeats, Ser-rich; it reads SSSVAPSSSE…SVASSTSEAT (132 aa). A disordered region spans residues 206–299; the sequence is EVASSSVAPS…SVSSSSAVSS (94 aa). 5 N-linked (GlcNAc...) asparagine glycosylation sites follow: Asn327, Asn348, Asn368, Asn403, and Asn404. Asn465 carries GPI-anchor amidated asparagine lipidation. The propeptide at 466 to 487 is removed in mature form; it reads GAAKAVIGMGAGALAAVAAMLL.

It belongs to the SRP1/TIP1 family. Post-translationally, the GPI-anchor is attached to the protein in the endoplasmic reticulum and serves to target the protein to the cell surface. There, the glucosamine-inositol phospholipid moiety is cleaved off and the GPI-modified mannoprotein is covalently attached via its lipidless GPI glycan remnant to the 1,6-beta-glucan of the outer cell wall layer.

Its subcellular location is the secreted. It localises to the cell wall. The protein resides in the membrane. In terms of biological role, component of the cell wall. Required for anaerobic growth. This chain is Cell wall protein TIR4 (TIR4), found in Saccharomyces cerevisiae (strain ATCC 204508 / S288c) (Baker's yeast).